A 315-amino-acid chain; its full sequence is Phosphatidylglycerol--prolipoprotein diacylglyceryl transferase (315 aa).

2 helical membrane passes run 19–39 (FTIH…VWIL) and 93–113 (VWEG…VAFL). Arginine 141 provides a ligand contact to a 1,2-diacyl-sn-glycero-3-phospho-(1'-sn-glycerol). Transmembrane regions (helical) follow at residues 188 to 208 (LFHP…ALII) and 256 to 276 (VWTA…LYQY).

The protein belongs to the Lgt family.

It is found in the cell membrane. The enzyme catalyses L-cysteinyl-[prolipoprotein] + a 1,2-diacyl-sn-glycero-3-phospho-(1'-sn-glycerol) = an S-1,2-diacyl-sn-glyceryl-L-cysteinyl-[prolipoprotein] + sn-glycerol 1-phosphate + H(+). The protein operates within protein modification; lipoprotein biosynthesis (diacylglyceryl transfer). Catalyzes the transfer of the diacylglyceryl group from phosphatidylglycerol to the sulfhydryl group of the N-terminal cysteine of a prolipoprotein, the first step in the formation of mature lipoproteins. The sequence is that of Phosphatidylglycerol--prolipoprotein diacylglyceryl transferase from Bifidobacterium longum (strain NCC 2705).